Here is a 199-residue protein sequence, read N- to C-terminus: Elongation factor Ts (199 aa).

An involved in Mg(2+) ion dislocation from EF-Tu region spans residues 82–85 (TDFV).

Belongs to the EF-Ts family.

The protein localises to the cytoplasm. Its function is as follows. Associates with the EF-Tu.GDP complex and induces the exchange of GDP to GTP. It remains bound to the aminoacyl-tRNA.EF-Tu.GTP complex up to the GTP hydrolysis stage on the ribosome. This is Elongation factor Ts from Leptospira borgpetersenii serovar Hardjo-bovis (strain JB197).